The following is a 245-amino-acid chain: Probable phosphatase NT01EI_1577 (245 aa).

Residues histidine 7, histidine 9, histidine 15, histidine 40, glutamate 73, histidine 101, histidine 131, aspartate 192, and histidine 194 each coordinate Zn(2+).

The protein belongs to the PHP family. Homotrimer. Zn(2+) serves as cofactor.

The chain is Probable phosphatase NT01EI_1577 from Edwardsiella ictaluri (strain 93-146).